The chain runs to 219 residues: Deoxyribose-phosphate aldolase (219 aa).

Asp89 serves as the catalytic Proton donor/acceptor. Catalysis depends on Lys151, which acts as the Schiff-base intermediate with acetaldehyde. Residue Lys180 is the Proton donor/acceptor of the active site.

This sequence belongs to the DeoC/FbaB aldolase family. DeoC type 1 subfamily.

Its subcellular location is the cytoplasm. It carries out the reaction 2-deoxy-D-ribose 5-phosphate = D-glyceraldehyde 3-phosphate + acetaldehyde. It participates in carbohydrate degradation; 2-deoxy-D-ribose 1-phosphate degradation; D-glyceraldehyde 3-phosphate and acetaldehyde from 2-deoxy-alpha-D-ribose 1-phosphate: step 2/2. Its function is as follows. Catalyzes a reversible aldol reaction between acetaldehyde and D-glyceraldehyde 3-phosphate to generate 2-deoxy-D-ribose 5-phosphate. The sequence is that of Deoxyribose-phosphate aldolase from Clostridioides difficile (strain 630) (Peptoclostridium difficile).